Here is a 264-residue protein sequence, read N- to C-terminus: MKPTTIASLQKCKQDKKRFATITAYDYSFAKLFADEGLNVMLVGDSLGMTVQGHDSTLPVTVADIAYHTASVRRGAPNCLLLADLPFMAYATPEQAFENAATVMRAGANMVKIEGGEWLVETVKMLTERAVPVCGHLGLTPQSVNIFGGYKVQGRGDEAGDQLLSDALALEAAGAQLLVLECVPIELAKRITEALAIPVIGIGAGNVTDGQILVMHDAFGITGGHIPKFAKNFLAETGDIRAAVRQYMAEVESGVYPGEEHSFH.

Residues Asp45 and Asp84 each contribute to the Mg(2+) site. 3-methyl-2-oxobutanoate is bound by residues Asp45–Ser46, Asp84, and Lys112. A Mg(2+)-binding site is contributed by Glu114. The active-site Proton acceptor is the Glu181.

The protein belongs to the PanB family. As to quaternary structure, homodecamer; pentamer of dimers. Mg(2+) is required as a cofactor.

Its subcellular location is the cytoplasm. The enzyme catalyses 3-methyl-2-oxobutanoate + (6R)-5,10-methylene-5,6,7,8-tetrahydrofolate + H2O = 2-dehydropantoate + (6S)-5,6,7,8-tetrahydrofolate. The protein operates within cofactor biosynthesis; (R)-pantothenate biosynthesis; (R)-pantoate from 3-methyl-2-oxobutanoate: step 1/2. Functionally, catalyzes the reversible reaction in which hydroxymethyl group from 5,10-methylenetetrahydrofolate is transferred onto alpha-ketoisovalerate to form ketopantoate. In Shigella sonnei (strain Ss046), this protein is 3-methyl-2-oxobutanoate hydroxymethyltransferase.